The following is a 328-amino-acid chain: Tetraacyldisaccharide 4'-kinase (328 aa).

55-62 (TAGGNGKT) lines the ATP pocket.

This sequence belongs to the LpxK family.

The enzyme catalyses a lipid A disaccharide + ATP = a lipid IVA + ADP + H(+). Its pathway is glycolipid biosynthesis; lipid IV(A) biosynthesis; lipid IV(A) from (3R)-3-hydroxytetradecanoyl-[acyl-carrier-protein] and UDP-N-acetyl-alpha-D-glucosamine: step 6/6. Functionally, transfers the gamma-phosphate of ATP to the 4'-position of a tetraacyldisaccharide 1-phosphate intermediate (termed DS-1-P) to form tetraacyldisaccharide 1,4'-bis-phosphate (lipid IVA). The polypeptide is Tetraacyldisaccharide 4'-kinase (Yersinia pseudotuberculosis serotype I (strain IP32953)).